A 126-amino-acid polypeptide reads, in one-letter code: Late histone H2A.3, gonadal (126 aa).

Positions 1-18 (MSGRGKGAKAKGKAKSRS) are enriched in basic residues. A disordered region spans residues 1 to 21 (MSGRGKGAKAKGKAKSRSSRA). At Ser2 the chain carries N-acetylserine. Residue Ser2 is modified to Phosphoserine. Gln104 is modified (N5-methylglutamine). Residue Lys119 forms a Glycyl lysine isopeptide (Lys-Gly) (interchain with G-Cter in ubiquitin) linkage.

This sequence belongs to the histone H2A family. The nucleosome is a histone octamer containing two molecules each of H2A, H2B, H3 and H4 assembled in one H3-H4 heterotetramer and two H2A-H2B heterodimers. The octamer wraps approximately 147 bp of DNA. In terms of processing, monoubiquitination of Lys-119 gives a specific tag for epigenetic transcriptional repression. Post-translationally, phosphorylation of Ser-2 directly represses transcription.

It localises to the nucleus. It is found in the chromosome. Its function is as follows. Core component of nucleosome. Nucleosomes wrap and compact DNA into chromatin, limiting DNA accessibility to the cellular machineries which require DNA as a template. Histones thereby play a central role in transcription regulation, DNA repair, DNA replication and chromosomal stability. DNA accessibility is regulated via a complex set of post-translational modifications of histones, also called histone code, and nucleosome remodeling. In Psammechinus miliaris (Green sea urchin), this protein is Late histone H2A.3, gonadal.